Consider the following 74-residue polypeptide: Brevinin-2Ef (74 aa).

An N-terminal signal peptide occupies residues 1–22; sequence MFTMKKSLLLIFFLGTISLSLC. Residues 23-41 constitute a propeptide that is removed on maturation; that stretch reads QEERNADDDDGEMTEEEKR. An intrachain disulfide couples Cys68 to Cys74.

The protein belongs to the frog skin active peptide (FSAP) family. Brevinin subfamily. As to expression, expressed by the skin glands.

Its subcellular location is the secreted. In terms of biological role, shows antibacterial activity against representative Gram-negative and Gram-positive bacterial species, and hemolytic activity. This Pelophylax lessonae (Pool frog) protein is Brevinin-2Ef.